The primary structure comprises 502 residues: ATP synthase subunit alpha (502 aa).

Position 169–176 (169–176 (GDRQTGKT)) interacts with ATP.

The protein belongs to the ATPase alpha/beta chains family. As to quaternary structure, F-type ATPases have 2 components, CF(1) - the catalytic core - and CF(0) - the membrane proton channel. CF(1) has five subunits: alpha(3), beta(3), gamma(1), delta(1), epsilon(1). CF(0) has three main subunits: a(1), b(2) and c(9-12). The alpha and beta chains form an alternating ring which encloses part of the gamma chain. CF(1) is attached to CF(0) by a central stalk formed by the gamma and epsilon chains, while a peripheral stalk is formed by the delta and b chains.

Its subcellular location is the cell inner membrane. It carries out the reaction ATP + H2O + 4 H(+)(in) = ADP + phosphate + 5 H(+)(out). Its function is as follows. Produces ATP from ADP in the presence of a proton gradient across the membrane. The alpha chain is a regulatory subunit. The polypeptide is ATP synthase subunit alpha (Thermodesulfovibrio yellowstonii (strain ATCC 51303 / DSM 11347 / YP87)).